The chain runs to 152 residues: Arginine repressor (152 aa).

It belongs to the ArgR family.

The protein resides in the cytoplasm. Its pathway is amino-acid biosynthesis; L-arginine biosynthesis [regulation]. Regulates arginine biosynthesis genes. This Lachnoclostridium phytofermentans (strain ATCC 700394 / DSM 18823 / ISDg) (Clostridium phytofermentans) protein is Arginine repressor.